The following is a 169-amino-acid chain: Shikimate kinase (169 aa).

Position 12 to 17 (12 to 17 (AVGKTT)) interacts with ATP. Thr-16 provides a ligand contact to Mg(2+). Substrate contacts are provided by Asp-34, Arg-58, and Gly-80. Position 119 (Arg-119) interacts with ATP. Arg-139 is a binding site for substrate. Residue Arg-156 participates in ATP binding.

This sequence belongs to the shikimate kinase family. In terms of assembly, monomer. Mg(2+) serves as cofactor.

The protein resides in the cytoplasm. The enzyme catalyses shikimate + ATP = 3-phosphoshikimate + ADP + H(+). It participates in metabolic intermediate biosynthesis; chorismate biosynthesis; chorismate from D-erythrose 4-phosphate and phosphoenolpyruvate: step 5/7. Catalyzes the specific phosphorylation of the 3-hydroxyl group of shikimic acid using ATP as a cosubstrate. The chain is Shikimate kinase from Alkaliphilus oremlandii (strain OhILAs) (Clostridium oremlandii (strain OhILAs)).